Consider the following 1103-residue polypeptide: Trophozoite exported protein 1 (1103 aa).

The stretch at 173-212 (KKEKIEDKKYEQDDEEENEEEEEEEEEEEGEEENKEDEEF) forms a coiled coil. Disordered regions lie at residues 178–210 (EDKK…KEDE) and 271–301 (KSYS…DNGK). Over residues 184 to 210 (QDDEEENEEEEEEEEEEEGEEENKEDE) the composition is skewed to acidic residues. Over residues 271–280 (KSYSGDEKIN) the composition is skewed to basic and acidic residues. Coiled coils occupy residues 304 to 330 (DYVK…LECN) and 478 to 518 (YKNY…KLNN). Positions 544 to 601 (YFDEGENPYNRNNKNYRTDNKNSDDNNNNNNYYYNNYNSDDNYNSEDNEYNNGNYRFR) are disordered. Over residues 568–585 (DNNNNNNYYYNNYNSDDN) the composition is skewed to low complexity. Coiled-coil stretches lie at residues 650-791 (FRNL…LSGI), 819-932 (DEKY…IYKK), and 993-1030 (NKKL…NLSK). The segment at 1050–1089 (CSVCMENFRNYIIIKCGHIYCNNCIFNNLKTRNRKCPQCK) adopts an RING-type zinc-finger fold.

The protein resides in the host cell membrane. This Plasmodium falciparum (isolate 3D7) protein is Trophozoite exported protein 1.